The sequence spans 343 residues: MDPSGMMNEGGPFNLAEIWQFPLNGVSTAGDSSRRSFVGPNQFGDADLTTAANGDPARMSHALSQAVIEGISGAWKRREDESKSAKIVSTIGASEGENKRQKIDEVCDGKAEAESLGTETEQKKQQMEPTKDYIHVRARRGQATDSHSLAERARREKISERMKILQDLVPGCNKVIGKALVLDEIINYIQSLQRQVEFLSMKLEAVNSRMNPGIEVFPPKEVMILMIINSIFSIFFTKQYMFLSRYSRGRSLDVYAVRSFKHCNKRSDLCFCSCSPKTELKTTIFSQNMTCFCRYSRVGVAISSSKHCNEPVTLCFYSYCLRKIYHFLLWNLKYKIQKSVLFS.

A bHLH domain is found at 142 to 192 (QATDSHSLAERARREKISERMKILQDLVPGCNKVIGKALVLDEIINYIQSL).

As to quaternary structure, homodimer. In terms of tissue distribution, specifically expressed in flowers, mostly in petals, inflorescence and flower buds. As to expression, expressed ubiquitously (leaves, flowers and stems).

It localises to the nucleus. Functionally, involved in the control of petal size, by interfering with postmitotic cell expansion to limit final petal cell size. The polypeptide is Transcription factor BPE (BPE) (Arabidopsis thaliana (Mouse-ear cress)).